The primary structure comprises 127 residues: Aspartate 1-decarboxylase (127 aa).

Residue Ser25 is the Schiff-base intermediate with substrate; via pyruvic acid of the active site. Pyruvic acid (Ser) is present on Ser25. Thr57 contributes to the substrate binding site. Tyr58 functions as the Proton donor in the catalytic mechanism. 73-75 (GAA) contacts substrate.

This sequence belongs to the PanD family. As to quaternary structure, heterooctamer of four alpha and four beta subunits. Pyruvate is required as a cofactor. Is synthesized initially as an inactive proenzyme, which is activated by self-cleavage at a specific serine bond to produce a beta-subunit with a hydroxyl group at its C-terminus and an alpha-subunit with a pyruvoyl group at its N-terminus.

It localises to the cytoplasm. It catalyses the reaction L-aspartate + H(+) = beta-alanine + CO2. It functions in the pathway cofactor biosynthesis; (R)-pantothenate biosynthesis; beta-alanine from L-aspartate: step 1/1. In terms of biological role, catalyzes the pyruvoyl-dependent decarboxylation of aspartate to produce beta-alanine. This Geobacillus sp. (strain WCH70) protein is Aspartate 1-decarboxylase.